The sequence spans 329 residues: DNA-directed RNA polymerase subunit alpha (329 aa).

The interval Met1–Arg234 is alpha N-terminal domain (alpha-NTD). The interval Phe248 to Leu329 is alpha C-terminal domain (alpha-CTD).

Belongs to the RNA polymerase alpha chain family. In terms of assembly, homodimer. The RNAP catalytic core consists of 2 alpha, 1 beta, 1 beta' and 1 omega subunit. When a sigma factor is associated with the core the holoenzyme is formed, which can initiate transcription.

The enzyme catalyses RNA(n) + a ribonucleoside 5'-triphosphate = RNA(n+1) + diphosphate. Functionally, DNA-dependent RNA polymerase catalyzes the transcription of DNA into RNA using the four ribonucleoside triphosphates as substrates. The polypeptide is DNA-directed RNA polymerase subunit alpha (Shewanella loihica (strain ATCC BAA-1088 / PV-4)).